We begin with the raw amino-acid sequence, 1107 residues long: OTU domain-containing protein 4 (1107 aa).

An N-acetylmethionine modification is found at Met1. One can recognise an OTU domain in the interval Leu34–Ile155. A cys-loop region spans residues Val39–Cys45. The active site involves Asp42. Cys45 acts as the Nucleophile in catalysis. The segment at Leu94–Val104 is variable-loop. Position 120 is a phosphotyrosine (Tyr120). Ser126 and Ser128 each carry phosphoserine. A Phosphothreonine modification is found at Thr131. The his-loop stretch occupies residues Phe143–His148. His148 is an active-site residue. Phosphoserine occurs at positions 166, 199, 202, and 204. The segment covering Glu195–Asp206 has biased composition (acidic residues). Disordered stretches follow at residues Glu195–Leu239 and Lys322–His431. Positions Gly226–Ser236 are enriched in polar residues. Position 340 is a phosphoserine (Ser340). Positions Ser392–Ser403 are enriched in low complexity. Basic and acidic residues predominate over residues Arg419–His431. Tyr438 is modified (phosphotyrosine). Ser442 is modified (phosphoserine). A Phosphotyrosine modification is found at Tyr459. Positions Pro470–Asn568 are disordered. Residues Ser473–Asn486 show a composition bias toward low complexity. The segment covering His495–Glu528 has biased composition (basic and acidic residues). Phosphoserine occurs at positions 544 and 895. The tract at residues Leu918–Thr1107 is disordered. The segment covering Asn963–Thr994 has biased composition (basic and acidic residues). Residues Ser1000, Ser1005, Ser1016, and Ser1017 each carry the phosphoserine modification. Over residues Ser1032–Gly1041 the composition is skewed to polar residues. Ser1042 bears the Phosphoserine mark. Basic and acidic residues-rich tracts occupy residues Val1060–Gln1079 and Tyr1089–Thr1107.

In terms of assembly, interacts with MYD88; the interaction is direct. Interacts with ALKBH3; the interaction is direct. Interacts with USP7; the interaction is direct. Interacts with USP9X; the interaction is direct. In terms of processing, phosphorylation at Ser-202 and Ser-204 activates 'Lys-63'-specific deubiquitinase activity. Induced upon stimulation with IL1B.

Its subcellular location is the cytoplasm. It localises to the nucleus. It catalyses the reaction Thiol-dependent hydrolysis of ester, thioester, amide, peptide and isopeptide bonds formed by the C-terminal Gly of ubiquitin (a 76-residue protein attached to proteins as an intracellular targeting signal).. Phosphorylation on Ser-202 and Ser-204 induces 'Lys-63'-specific deubiquitinase activity. Its function is as follows. Deubiquitinase which hydrolyzes the isopeptide bond between the ubiquitin C-terminus and the lysine epsilon-amino group of the target protein. May negatively regulate inflammatory and pathogen recognition signaling in innate immune response. Upon phosphorylation at Ser-202 and Ser-204 residues, via IL-1 receptor and Toll-like receptor signaling pathway, specifically deubiquitinates 'Lys-63'-polyubiquitinated MYD88 adapter protein triggering down-regulation of NF-kappa-B-dependent transcription of inflammatory mediators. Independently of the catalytic activity, acts as a scaffold for alternative deubiquitinases to assemble specific deubiquitinase-substrate complexes. Associates with USP7 and USP9X deubiquitinases to stabilize alkylation repair enzyme ALKBH3, thereby promoting the repair of alkylated DNA lesions. The polypeptide is OTU domain-containing protein 4 (Mus musculus (Mouse)).